The following is a 335-amino-acid chain: N-acetyl-gamma-glutamyl-phosphate reductase (335 aa).

Cys156 is a catalytic residue.

The protein belongs to the NAGSA dehydrogenase family. Type 1 subfamily.

It is found in the cytoplasm. The catalysed reaction is N-acetyl-L-glutamate 5-semialdehyde + phosphate + NADP(+) = N-acetyl-L-glutamyl 5-phosphate + NADPH + H(+). The protein operates within amino-acid biosynthesis; L-arginine biosynthesis; N(2)-acetyl-L-ornithine from L-glutamate: step 3/4. Catalyzes the NADPH-dependent reduction of N-acetyl-5-glutamyl phosphate to yield N-acetyl-L-glutamate 5-semialdehyde. The sequence is that of N-acetyl-gamma-glutamyl-phosphate reductase from Tolumonas auensis (strain DSM 9187 / NBRC 110442 / TA 4).